The sequence spans 245 residues: tRNA pseudouridine synthase A (245 aa).

Asp52 functions as the Nucleophile in the catalytic mechanism. Tyr111 serves as a coordination point for substrate.

It belongs to the tRNA pseudouridine synthase TruA family. In terms of assembly, homodimer.

The enzyme catalyses uridine(38/39/40) in tRNA = pseudouridine(38/39/40) in tRNA. In terms of biological role, formation of pseudouridine at positions 38, 39 and 40 in the anticodon stem and loop of transfer RNAs. The protein is tRNA pseudouridine synthase A of Rhodospirillum centenum (strain ATCC 51521 / SW).